A 47-amino-acid polypeptide reads, in one-letter code: Photosystem II reaction center protein K (47 aa).

A propeptide spanning residues 1-10 is cleaved from the precursor; that stretch reads MALINFDLLA. A helical membrane pass occupies residues 26–46; it reads LPLIPLFFFLLVFVWQAAVGF.

Belongs to the PsbK family. In terms of assembly, PSII is composed of 1 copy each of membrane proteins PsbA, PsbB, PsbC, PsbD, PsbE, PsbF, PsbH, PsbI, PsbJ, PsbK, PsbL, PsbM, PsbT, PsbX, PsbY, Psb30/Ycf12, peripheral proteins PsbO, CyanoQ (PsbQ), PsbU, PsbV and a large number of cofactors. It forms dimeric complexes.

It is found in the cellular thylakoid membrane. Its function is as follows. One of the components of the core complex of photosystem II (PSII). PSII is a light-driven water:plastoquinone oxidoreductase that uses light energy to abstract electrons from H(2)O, generating O(2) and a proton gradient subsequently used for ATP formation. It consists of a core antenna complex that captures photons, and an electron transfer chain that converts photonic excitation into a charge separation. In Prochlorococcus marinus (strain NATL1A), this protein is Photosystem II reaction center protein K.